Consider the following 210-residue polypeptide: Large ribosomal subunit protein bL25 (210 aa).

A disordered region spans residues 175–210 (IATILPPQQEEEIDSGEQQEAGQPDAAEGRETTPEE). Over residues 201–210 (AEGRETTPEE) the composition is skewed to basic and acidic residues.

Belongs to the bacterial ribosomal protein bL25 family. CTC subfamily. In terms of assembly, part of the 50S ribosomal subunit; part of the 5S rRNA/L5/L18/L25 subcomplex. Contacts the 5S rRNA. Binds to the 5S rRNA independently of L5 and L18.

This is one of the proteins that binds to the 5S RNA in the ribosome where it forms part of the central protuberance. The chain is Large ribosomal subunit protein bL25 from Geobacillus kaustophilus (strain HTA426).